A 316-amino-acid polypeptide reads, in one-letter code: Methionyl-tRNA formyltransferase (316 aa).

109–112 (SLLP) is a binding site for (6S)-5,6,7,8-tetrahydrofolate.

It belongs to the Fmt family.

The enzyme catalyses L-methionyl-tRNA(fMet) + (6R)-10-formyltetrahydrofolate = N-formyl-L-methionyl-tRNA(fMet) + (6S)-5,6,7,8-tetrahydrofolate + H(+). Its function is as follows. Attaches a formyl group to the free amino group of methionyl-tRNA(fMet). The formyl group appears to play a dual role in the initiator identity of N-formylmethionyl-tRNA by promoting its recognition by IF2 and preventing the misappropriation of this tRNA by the elongation apparatus. The sequence is that of Methionyl-tRNA formyltransferase from Nitrosomonas eutropha (strain DSM 101675 / C91 / Nm57).